Consider the following 119-residue polypeptide: Large ribosomal subunit protein bL20 (119 aa).

It belongs to the bacterial ribosomal protein bL20 family.

In terms of biological role, binds directly to 23S ribosomal RNA and is necessary for the in vitro assembly process of the 50S ribosomal subunit. It is not involved in the protein synthesizing functions of that subunit. This chain is Large ribosomal subunit protein bL20, found in Acinetobacter baumannii (strain SDF).